Consider the following 218-residue polypeptide: Glutathione S-transferase D7 (218 aa).

The 82-residue stretch at 1-82 folds into the GST N-terminal domain; sequence MTPVLYYLPP…YLVSAYGKDE (82 aa). Glutathione is bound by residues Ser11, 52–54, and 66–68; these read HCI and ESR. The region spanning 88–207 is the GST C-terminal domain; sequence DFRSRAIVDQ…KEINETGAET (120 aa).

The protein belongs to the GST superfamily. Theta family. As to quaternary structure, homodimer.

The catalysed reaction is RX + glutathione = an S-substituted glutathione + a halide anion + H(+). Its function is as follows. Conjugation of reduced glutathione to a wide number of exogenous and endogenous hydrophobic electrophiles. This is Glutathione S-transferase D7 from Anopheles gambiae (African malaria mosquito).